The sequence spans 199 residues: MSQSSNITWHDSEVTKSDRQQQNGHKSVVIWFTGLSGSGKSTVSVELEKALFQLEKHSYRLDGDNVRHGLNKNLGFSPEDRKENIRRIGEVSKLLVDAGTIAITAFISPYRADRDEVREILEDGEFIEVYTECSVEACEQRDPKGLYKKARSGEIKEFTGISASYEAPHQPEITINTEHQSVEESVSTIIEYLKNKEII.

Positions Met-1–Gln-21 are disordered. A compositionally biased stretch (basic and acidic residues) spans His-10–Arg-19. Gly-34–Ser-41 provides a ligand contact to ATP. Ser-108 functions as the Phosphoserine intermediate in the catalytic mechanism.

This sequence belongs to the APS kinase family.

The catalysed reaction is adenosine 5'-phosphosulfate + ATP = 3'-phosphoadenylyl sulfate + ADP + H(+). It participates in sulfur metabolism; hydrogen sulfide biosynthesis; sulfite from sulfate: step 2/3. Its function is as follows. Catalyzes the synthesis of activated sulfate. This Staphylococcus haemolyticus (strain JCSC1435) protein is Adenylyl-sulfate kinase.